We begin with the raw amino-acid sequence, 101 residues long: Small ribosomal subunit protein bS18c (101 aa).

It belongs to the bacterial ribosomal protein bS18 family. In terms of assembly, part of the 30S ribosomal subunit.

The protein resides in the plastid. It is found in the chloroplast. This Guizotia abyssinica (Niger) protein is Small ribosomal subunit protein bS18c.